Consider the following 747-residue polypeptide: Endopolyphosphatase (747 aa).

Met1 is a topological domain (cytoplasmic). The chain crosses the membrane as a helical; Signal-anchor for type II membrane protein span at residues 2-22 (LPKTLTIWASLASLAVAQSGQ). Topologically, residues 23–747 (VVFAKNADGK…AEYLEEPDDD (725 aa)) are vacuolar. N-linked (GlcNAc...) asparagine glycans are attached at residues Asn134, Asn191, and Asn463. Residues 570 to 640 (AVATSSEPES…PKFPKDLQPG (71 aa)) form a disordered region. Acidic residues predominate over residues 577-586 (PESDDYDSDL). The span at 591-625 (KKGKKKGKKGKKGKKGKKGKKKKGKKGKKGKKGKR) shows a compositional bias: basic residues. The span at 626-635 (DKSMPPKFPK) shows a compositional bias: basic and acidic residues. N-linked (GlcNAc...) asparagine glycosylation occurs at Asn659.

It belongs to the endopolyphosphatase PPN1 family. A divalent metal cation serves as cofactor. In terms of processing, processing by proteases in the vacuole may be required for activation.

The protein localises to the vacuole membrane. It carries out the reaction [phosphate](n+1) + n H2O = (n+1) phosphate + n H(+). Functionally, catalyzes the hydrolysis of inorganic polyphosphate (polyP) chains of many hundreds of phosphate residues into shorter lengths. The protein is Endopolyphosphatase (PPN1) of Yarrowia lipolytica (strain CLIB 122 / E 150) (Yeast).